The following is a 215-amino-acid chain: Translation initiation factor IF-3 (215 aa).

Positions 159–215 are disordered; it reads SAEVQQPPKREGRNMIMFLGPRKTPLQKDKPEQATKAERTLPIAKPPGKTAAPAAAN. Residues 184–197 are compositionally biased toward basic and acidic residues; that stretch reads LQKDKPEQATKAER. Residues 200–215 are compositionally biased toward low complexity; it reads PIAKPPGKTAAPAAAN.

This sequence belongs to the IF-3 family. In terms of assembly, monomer.

The protein localises to the cytoplasm. Its function is as follows. IF-3 binds to the 30S ribosomal subunit and shifts the equilibrium between 70S ribosomes and their 50S and 30S subunits in favor of the free subunits, thus enhancing the availability of 30S subunits on which protein synthesis initiation begins. In Synechococcus sp. (strain RCC307), this protein is Translation initiation factor IF-3.